Reading from the N-terminus, the 341-residue chain is ATP-dependent 6-phosphofructokinase 3 (341 aa).

Residues glycine 10, 72–73 (RV), and 102–105 (GEGT) each bind ATP. Glutamate 103 is a binding site for Mg(2+). Substrate contacts are provided by residues 125–127 (TID), arginine 162, 169–171 (MGR), glutamate 222, arginine 266, and 272–275 (HVQR). Aspartate 127 (proton acceptor) is an active-site residue.

The protein belongs to the phosphofructokinase type A (PFKA) family. Mixed-substrate PFK group III subfamily. In terms of assembly, homodimer or homotetramer. The cofactor is Mg(2+).

It is found in the cytoplasm. It carries out the reaction beta-D-fructose 6-phosphate + ATP = beta-D-fructose 1,6-bisphosphate + ADP + H(+). Its pathway is carbohydrate degradation; glycolysis; D-glyceraldehyde 3-phosphate and glycerone phosphate from D-glucose: step 3/4. Its function is as follows. Catalyzes the phosphorylation of D-fructose 6-phosphate to fructose 1,6-bisphosphate by ATP, the first committing step of glycolysis. The chain is ATP-dependent 6-phosphofructokinase 3 from Streptomyces coelicolor (strain ATCC BAA-471 / A3(2) / M145).